Reading from the N-terminus, the 181-residue chain is UPF0397 protein SSU98_0390 (181 aa).

5 helical membrane-spanning segments follow: residues Val-9–Pro-29, Leu-46–Leu-66, Leu-70–Gly-90, Ile-108–Pro-128, and Leu-147–Val-167.

It belongs to the UPF0397 family.

The protein resides in the cell membrane. The protein is UPF0397 protein SSU98_0390 of Streptococcus suis (strain 98HAH33).